Consider the following 98-residue polypeptide: Ribonuclease kappa (98 aa).

2 helical membrane passes run 13–33 (ACGI…GIFF) and 65–85 (VSYN…FSFC).

Belongs to the RNase K family. As to quaternary structure, interacts with the proton translocation complex V0 of the V-ATPase. Interacts with ATP6AP1. As to expression, expressed in brain (at protein level).

The protein resides in the endomembrane system. It is found in the cytoplasmic vesicle. The protein localises to the clathrin-coated vesicle membrane. Endoribonuclease which preferentially cleaves ApU and ApG phosphodiester bonds. Hydrolyzes UpU bonds at a lower rate. Regulates the activity of vacuolar (H+)-ATPase (V-ATPase) which is responsible for acidifying and maintaining the pH of intracellular compartments. Required at an early stage of receptor-mediated endocytosis. The sequence is that of Ribonuclease kappa (RNASEK) from Bos taurus (Bovine).